The chain runs to 311 residues: ATP synthase subunit a (311 aa).

Helical transmembrane passes span 62-82 (AVHV…GFFM), 123-143 (VAPM…MDLI), 179-199 (VTVF…WGFI), 213-233 (FWYF…VALI), 253-273 (IFIL…LGGI), and 276-296 (FGWA…FMVL).

Belongs to the ATPase A chain family. In terms of assembly, F-type ATPases have 2 components, CF(1) - the catalytic core - and CF(0) - the membrane proton channel. CF(1) has five subunits: alpha(3), beta(3), gamma(1), delta(1), epsilon(1). CF(0) has three main subunits: a(1), b(2) and c(9-12). The alpha and beta chains form an alternating ring which encloses part of the gamma chain. CF(1) is attached to CF(0) by a central stalk formed by the gamma and epsilon chains, while a peripheral stalk is formed by the delta and b chains.

It localises to the cell inner membrane. Key component of the proton channel; it plays a direct role in the translocation of protons across the membrane. The sequence is that of ATP synthase subunit a from Teredinibacter turnerae (strain ATCC 39867 / T7901).